Reading from the N-terminus, the 259-residue chain is 3-deoxy-manno-octulosonate cytidylyltransferase (259 aa).

This sequence belongs to the KdsB family.

Its subcellular location is the cytoplasm. It carries out the reaction 3-deoxy-alpha-D-manno-oct-2-ulosonate + CTP = CMP-3-deoxy-beta-D-manno-octulosonate + diphosphate. It participates in nucleotide-sugar biosynthesis; CMP-3-deoxy-D-manno-octulosonate biosynthesis; CMP-3-deoxy-D-manno-octulosonate from 3-deoxy-D-manno-octulosonate and CTP: step 1/1. It functions in the pathway bacterial outer membrane biogenesis; lipopolysaccharide biosynthesis. Functionally, activates KDO (a required 8-carbon sugar) for incorporation into bacterial lipopolysaccharide in Gram-negative bacteria. This is 3-deoxy-manno-octulosonate cytidylyltransferase from Alkalilimnicola ehrlichii (strain ATCC BAA-1101 / DSM 17681 / MLHE-1).